A 409-amino-acid chain; its full sequence is O-glucosyltransferase rumi (409 aa).

The first 20 residues, 1 to 20 (MLINVVLIILLVGLNGKASG), serve as a signal peptide directing secretion. Disulfide bonds link C62–C73, C71–C376, C118–C124, and C280–C303. The Proton donor/acceptor role is filled by D149. Residues 190 to 195 (ATKLHP) form an interaction with the consensus sequence C-X-S-X-[PA]-C in peptide substrates region. Residues 227–231 (RGSRT), R235, 274–276 (VSF), and 292–296 (AASFR) contribute to the UDP-alpha-D-glucose site. The Prevents secretion from ER signature appears at 406 to 409 (KDEL).

Belongs to the glycosyltransferase 90 family.

It is found in the endoplasmic reticulum lumen. The protein operates within protein modification; protein glycosylation. Functionally, protein O-glucosyltransferase. Catalyzes the reaction that attaches glucose through an O-glycosidic linkage to a conserved serine residue found in the consensus sequence C-X-S-X-[PA]-C in epidermal growth factor-like repeats. Regulates Notch signaling by glucosylating Notch in the ER, glucosylation is required for the correct folding and cleavage of Notch. In Drosophila pseudoobscura pseudoobscura (Fruit fly), this protein is O-glucosyltransferase rumi.